Here is a 54-residue protein sequence, read N- to C-terminus: Califin-C (54 aa).

A disulfide bond links C25 and C53. A Leucine amide modification is found at L36.

Belongs to the molluscan ELH family. As to quaternary structure, this protein consists of a large 36-residue subunit, bound by a single disulfide-bond to a small 18-residue subunit.

Its subcellular location is the secreted. Functionally, injected in sexually mature animals califin C excites LB and LC cells of the abdominal ganglion and cause egg-laying. In Aplysia californica (California sea hare), this protein is Califin-C.